The chain runs to 603 residues: O-acetyltransferase OatA (603 aa).

The next 11 helical transmembrane spans lie at 17-37 (YLPGLDGLRAFAVIGIIIYHL), 45-65 (GFLGVDTFFVISGYLITSLLI), 87-107 (LIPAVLFLICVVLTFTLIFKP), 148-168 (LWSLAIEEQFYLLFPLVITFL), 177-197 (IIQTLFIVSLISLGLMIVIHF), 211-231 (TRLQTLLLGCILAFIWPPFAL), 239-259 (IVVSLDIIGISGFAVLMTLFF), 268-288 (IYNGGFYIISFATLFIIAIAV), 311-331 (YSLYLWHYPIIVFVNSYYVQG), 333-353 (IPVYVYIIEILLTALMAEISY), and 382-402 (VLVILLLVPSIVVLSGQFDAL). Active-site residues include Ser453, Asp575, and His578.

This sequence belongs to the acyltransferase 3 family. As to quaternary structure, monomer.

Its subcellular location is the cell membrane. In terms of biological role, responsible for O-acetylation at the C(6)-hydroxyl group of N-acetylmuramyl residues, forming the corresponding N,6-O-diacetylmuramic acid of the peptidoglycan. O-acetylation of the peptidoglycan is the major determinant for lysozyme resistance. This is O-acetyltransferase OatA from Staphylococcus aureus (strain NCTC 8325 / PS 47).